The chain runs to 355 residues: Green-sensitive opsin (355 aa).

Topologically, residues 1–36 (MNGTEGINFYVPMSNKTGVVRSPFEYPQYYLAEPWK) are extracellular. 2 N-linked (GlcNAc...) asparagine glycosylation sites follow: N2 and N15. Residues 37-61 (YRLVCCYIFFLISTGLPINLLTLLV) traverse the membrane as a helical segment. Residues 62–73 (TFKHKKLRQPLN) are Cytoplasmic-facing. Residues 74–99 (YILVNLAVADLFMACFGFTVTFYTAW) traverse the membrane as a helical segment. The Extracellular portion of the chain corresponds to 100 to 113 (NGYFVFGPVGCAVE). An intrachain disulfide couples C110 to C187. A helical membrane pass occupies residues 114-133 (GFFATLGGQVALWSLVVLAI). At 134–152 (ERYIVVCKPMGNFRFSATH) the chain is on the cytoplasmic side. Residues 153-176 (AMMGIAFTWVMAFSCAAPPLFGWS) form a helical membrane-spanning segment. Residues 177-202 (RYMPEGMQCSCGPDYYTHNPDYHNES) are Extracellular-facing. The helical transmembrane segment at 203-230 (YVLYMFVIHFIIPVVVIFFSYGRLICKV) threads the bilayer. Over 231–252 (REAAAQQQESATTQKAEKEVTR) the chain is Cytoplasmic. Residues 253-276 (MVILMVLGFMLAWTPYAVVAFWIF) traverse the membrane as a helical segment. Residues 277–284 (TNKGADFT) are Extracellular-facing. Residues 285-309 (ATLMAVPAFFSKSSSLYNPIIYVLM) traverse the membrane as a helical segment. Residue K296 is modified to N6-(retinylidene)lysine. Over 310-355 (NKQFRNCMITTICCGKNPFGDEDVSSTVSQSKTEVSSVSSSQVSPA) the chain is Cytoplasmic.

Belongs to the G-protein coupled receptor 1 family. Opsin subfamily. Post-translationally, phosphorylated on some or all of the serine and threonine residues present in the C-terminal region. The color pigments are found in the cone photoreceptor cells.

It localises to the membrane. Functionally, visual pigments are the light-absorbing molecules that mediate vision. They consist of an apoprotein, opsin, covalently linked to cis-retinal. This Gallus gallus (Chicken) protein is Green-sensitive opsin (PRA1).